Consider the following 196-residue polypeptide: Small heat shock protein C3 (196 aa).

Residues 88 to 196 (SAYSSSAIRT…EKDAKEIPIQ (109 aa)) form the sHSP domain.

The protein belongs to the small heat shock protein (HSP20) family.

The protein is Small heat shock protein C3 (hspc3-1) of Rickettsia felis (strain ATCC VR-1525 / URRWXCal2) (Rickettsia azadi).